A 196-amino-acid polypeptide reads, in one-letter code: Alpha-crystallin A chain (196 aa).

Methionine 1 bears the N-acetylmethionine mark. The interval 1 to 63 (MDVTIQHPWF…RTVLDSGISE (63 aa)) is required for complex formation with BFSP1 and BFSP2. Deamidated glutamine; partial is present on glutamine 6. Serine 45 carries the phosphoserine modification. Deamidated glutamine; partial is present on glutamine 50. Residues 76–185 (HAGNPKNNPV…GHSERAIPVS (110 aa)) enclose the sHSP domain. 2 positions are modified to N6-acetyllysine: lysine 93 and lysine 122. Histidine 123 lines the Zn(2+) pocket. At asparagine 124 the chain carries Deamidated asparagine; partial. Zn(2+)-binding residues include glutamate 125 and histidine 130. At serine 145 the chain carries Phosphoserine. Asparagine 146 is modified (deamidated asparagine; partial). Residues 168–196 (KVQSGLDAGHSERAIPVSREEKPSSAPSS) are disordered. A Deamidated glutamine; partial modification is found at glutamine 170. A compositionally biased stretch (basic and acidic residues) spans 176 to 190 (GHSERAIPVSREEKP). Histidine 177 serves as a coordination point for Zn(2+). Serine 185 carries an O-linked (GlcNAc) serine glycan.

It belongs to the small heat shock protein (HSP20) family. In terms of assembly, heteropolymer composed of three CRYAA and one CRYAB subunits. Inter-subunit bridging via zinc ions enhances stability, which is crucial as there is no protein turn over in the lens. Can also form homodimers and homotetramers (dimers of dimers) which serve as the building blocks of homooligomers. Within homooligomers, the zinc-binding motif is created from residues of 3 different molecules. His-123 and Glu-125 from one molecule are ligands of the zinc ion, and His-130 and His-177 residues from additional molecules complete the site with tetrahedral coordination geometry. Part of a complex required for lens intermediate filament formation composed of BFSP1, BFSP2 and CRYAA. In terms of processing, acetylation at Lys-93 may increase chaperone activity. Post-translationally, undergoes age-dependent proteolytical cleavage at the C-terminus.

Its subcellular location is the cytoplasm. The protein resides in the nucleus. Contributes to the transparency and refractive index of the lens. Acts as a chaperone, preventing aggregation of various proteins under a wide range of stress conditions. Required for the correct formation of lens intermediate filaments as part of a complex composed of BFSP1, BFSP2 and CRYAA. The sequence is that of Alpha-crystallin A chain (Cryaa) from Mus musculus (Mouse).